Reading from the N-terminus, the 414-residue chain is Na(+)-translocating NADH-quinone reductase subunit B (414 aa).

3 helical membrane-spanning segments follow: residues 56–76 (IMIM…YNAG), 129–149 (FLPI…LFCM), and 164–184 (ILFA…LGIT). Thr-236 is modified (FMN phosphoryl threonine). Transmembrane regions (helical) follow at residues 268 to 288 (IPGS…AMIV), 297 to 317 (IIAG…VIGS), 325 to 345 (MPWH…FMAT), 358 to 378 (WWYG…NPAY), and 381 to 401 (GMML…HVVI).

The protein belongs to the NqrB/RnfD family. As to quaternary structure, composed of six subunits; NqrA, NqrB, NqrC, NqrD, NqrE and NqrF. FMN is required as a cofactor.

It is found in the cell inner membrane. It catalyses the reaction a ubiquinone + n Na(+)(in) + NADH + H(+) = a ubiquinol + n Na(+)(out) + NAD(+). This reaction is tightly coupled to the Na(+) pumping activity and specifically requires Na(+) for activity. Inhibited by korormicin and 2-N-heptyl-4-hydroxyquinoline N-oxide (HQNO). In terms of biological role, NQR complex catalyzes the reduction of ubiquinone-1 to ubiquinol by two successive reactions, coupled with the transport of Na(+) ions from the cytoplasm to the periplasm. NqrA to NqrE are probably involved in the second step, the conversion of ubisemiquinone to ubiquinol. In Vibrio alginolyticus, this protein is Na(+)-translocating NADH-quinone reductase subunit B.